The chain runs to 320 residues: Acetyl-coenzyme A carboxylase carboxyl transferase subunit alpha (320 aa).

Residues 39–293 (ALDAKAAKLL…RGAIAAMLKE (255 aa)) form the CoA carboxyltransferase C-terminal domain.

The protein belongs to the AccA family. As to quaternary structure, acetyl-CoA carboxylase is a heterohexamer composed of biotin carboxyl carrier protein (AccB), biotin carboxylase (AccC) and two subunits each of ACCase subunit alpha (AccA) and ACCase subunit beta (AccD).

Its subcellular location is the cytoplasm. The catalysed reaction is N(6)-carboxybiotinyl-L-lysyl-[protein] + acetyl-CoA = N(6)-biotinyl-L-lysyl-[protein] + malonyl-CoA. The protein operates within lipid metabolism; malonyl-CoA biosynthesis; malonyl-CoA from acetyl-CoA: step 1/1. Component of the acetyl coenzyme A carboxylase (ACC) complex. First, biotin carboxylase catalyzes the carboxylation of biotin on its carrier protein (BCCP) and then the CO(2) group is transferred by the carboxyltransferase to acetyl-CoA to form malonyl-CoA. The polypeptide is Acetyl-coenzyme A carboxylase carboxyl transferase subunit alpha (Ruegeria pomeroyi (strain ATCC 700808 / DSM 15171 / DSS-3) (Silicibacter pomeroyi)).